A 439-amino-acid chain; its full sequence is Putrescine transporter PotE (439 aa).

Transmembrane regions (helical) follow at residues 10–30 (GVVQ…IIML), 40–60 (ISII…WAFA), 91–111 (TYGV…VGYG), 114–134 (LLGA…VLWI), 152–172 (ITVW…WFWF), 186–206 (APFF…FLGL), 225–245 (IAVL…TNVI), 276–296 (VIMA…QFTI), 321–341 (APVQ…LMTI), 354–374 (NLAV…LVII), 387–407 (VANF…YSSG), and 410–430 (AMLY…LVSP).

This sequence belongs to the amino acid-polyamine-organocation (APC) superfamily. Basic amino acid/polyamine antiporter (APA) (TC 2.A.3.2) family.

It is found in the cell inner membrane. The catalysed reaction is putrescine(in) + H(+)(in) = putrescine(out) + H(+)(out). The enzyme catalyses putrescine(in) + L-ornithine(out) = putrescine(out) + L-ornithine(in). In terms of biological role, catalyzes both the uptake and excretion of putrescine. The uptake of putrescine is dependent on the membrane potential and the excretion involves putrescine-ornithine antiporter activity. This chain is Putrescine transporter PotE, found in Escherichia coli O6:H1 (strain CFT073 / ATCC 700928 / UPEC).